The chain runs to 487 residues: Meiotic recombination protein SPO11-4 (487 aa).

Residues 1-56 (MDDSTDDDSYHPRKHYAYDRQVSSSRWRTSREYIRGPGPETHTTESAQDGQDPPAG) form a disordered region. Residues 119-252 (KSRVEARKTL…LGIIAAEKGI (134 aa)) enclose the Topo IIA-type catalytic domain. Tyr-213 serves as the catalytic O-(5'-phospho-DNA)-tyrosine intermediate. Residues Glu-301 and Asp-353 each contribute to the Mg(2+) site.

Belongs to the TOP6A family. In terms of assembly, homodimer. Interacts with TOP6B. It depends on Mg(2+) as a cofactor.

Its subcellular location is the nucleus. The catalysed reaction is ATP-dependent breakage, passage and rejoining of double-stranded DNA.. Required for meiotic recombination. Mediates DNA cleavage that forms the double-strand breaks (DSB) that initiate meiotic recombination. Possesses double-stranded DNA cleavage activity in vitro. In Oryza sativa subsp. japonica (Rice), this protein is Meiotic recombination protein SPO11-4 (SPO11-4).